Consider the following 230-residue polypeptide: Transcription factor bHLH147 (230 aa).

Over residues 1–17 the composition is skewed to polar residues; sequence MESISPVSNQLLQPTTT. Residues 1 to 52 are disordered; it reads MESISPVSNQLLQPTTTSSNSDRSRRKRKKKSSPSSVEKSPSPSISLEKWRS. Over residues 33-46 the composition is skewed to low complexity; it reads SPSSVEKSPSPSIS. The 50-residue stretch at 147 to 196 folds into the bHLH domain; sequence KQRATVLRLKAKGLPAVQRKVKVLSRLVPGCRKQSLPVVLEETTDYIAAM. Positions 210–230 are disordered; the sequence is VSSSPPPPTPGHEGGQTHMLG.

As to quaternary structure, homodimer. Interacts with PRE3.

The protein localises to the nucleus. Atypical bHLH transcription factor probably unable to bind DNA. Negatively regulates brassinosteroid signaling. The sequence is that of Transcription factor bHLH147 (BHLH147) from Arabidopsis thaliana (Mouse-ear cress).